The sequence spans 495 residues: Tripartite motif-containing protein 5 (495 aa).

Position 2 is an N-acetylalanine (Ala-2). Residues 15–60 (CPICLELLTEPLSLHCGHSFCQACITANHKKSMLYKEGERSCPVCR) form an RING-type zinc finger. Ser-87 is modified (phosphoserine). Residues 92–133 (QKVDHCARHGEKLLLFCQEDRKVICWLCERSQEHRGHHTFLM) form a B box-type zinc finger. Zn(2+)-binding residues include Cys-97, His-100, Cys-119, and His-125. Residues 137–225 (AQEYHVKLQT…LTKSETEMVQ (89 aa)) are a coiled coil. Positions 187–200 (FEQLREILDWEESN) are required for interaction with GABARAP and for autophagy. The B30.2/SPRY domain occupies 283–495 (LKGMLDMFRE…VPMTLCSPSS (213 aa)).

Belongs to the TRIM/RBCC family. In terms of assembly, can form homodimers and homotrimers. In addition to lower-order dimerization, also exhibits a higher-order multimerization and both low- and high-order multimerizations are essential for its restriction activity. Interacts with BTBD1 and BTBD2. Interacts with PSMC4, PSMC5, PSMD7 and HSPA8/HSC70. Interacts (via B30.2/SPRY domain) with HSPA1A/B. Interacts with PSMC2, MAP3K7/TAK1, TAB2 and TAB3. Interacts with SQSTM1. Interacts with TRIM6 and TRIM34. Interacts with ULK1 (phosphorylated form), GABARAP, GABARAPL1, GABARAPL2, MAP1LC3A, MAP1LC3C and BECN1. Degraded in a proteasome-independent fashion in the absence of viral infection but in a proteasome-dependent fashion following exposure to restriction sensitive virus. Post-translationally, autoubiquitinated in a RING finger- and UBE2D2-dependent manner. Monoubiquitinated by TRIM21. Deubiquitinated by Yersinia YopJ. Ubiquitination may not lead to proteasomal degradation.

Its subcellular location is the cytoplasm. The protein localises to the nucleus. It catalyses the reaction S-ubiquitinyl-[E2 ubiquitin-conjugating enzyme]-L-cysteine + [acceptor protein]-L-lysine = [E2 ubiquitin-conjugating enzyme]-L-cysteine + N(6)-ubiquitinyl-[acceptor protein]-L-lysine.. The protein operates within protein modification; protein ubiquitination. In terms of biological role, capsid-specific restriction factor that prevents infection from non-host-adapted retroviruses. Blocks viral replication early in the life cycle, after viral entry but before reverse transcription. In addition to acting as a capsid-specific restriction factor, also acts as a pattern recognition receptor that activates innate immune signaling in response to the retroviral capsid lattice. Binding to the viral capsid triggers its E3 ubiquitin ligase activity, and in concert with the heterodimeric ubiquitin conjugating enzyme complex UBE2V1-UBE2N (also known as UBC13-UEV1A complex) generates 'Lys-63'-linked polyubiquitin chains, which in turn are catalysts in the autophosphorylation of the MAP3K7/TAK1 complex (includes TAK1, TAB2, and TAB3). Activation of the MAP3K7/TAK1 complex by autophosphorylation results in the induction and expression of NF-kappa-B and MAPK-responsive inflammatory genes, thereby leading to an innate immune response in the infected cell. Plays a role in regulating autophagy through activation of autophagy regulator BECN1 by causing its dissociation from its inhibitors BCL2 and TAB2. This is Tripartite motif-containing protein 5 (TRIM5) from Colobus guereza (Mantled guereza).